Consider the following 72-residue polypeptide: DNA-directed RNA polymerase subunit omega (72 aa).

The protein belongs to the RNA polymerase subunit omega family. In terms of assembly, the RNAP catalytic core consists of 2 alpha, 1 beta, 1 beta' and 1 omega subunit. When a sigma factor is associated with the core the holoenzyme is formed, which can initiate transcription.

The catalysed reaction is RNA(n) + a ribonucleoside 5'-triphosphate = RNA(n+1) + diphosphate. Functionally, promotes RNA polymerase assembly. Latches the N- and C-terminal regions of the beta' subunit thereby facilitating its interaction with the beta and alpha subunits. This Limosilactobacillus reuteri (strain DSM 20016) (Lactobacillus reuteri) protein is DNA-directed RNA polymerase subunit omega.